The sequence spans 485 residues: MTITPQNLIALLPLLIVGLTVVVVMLSIAWRRNHFLNATLSVIGLNAALVSLWFVGQAGAMDVTPLMRVDGFAMLYTGLVLLASLATCTFAYPWLEGYNDNKDEFYLLVLIAALGGILLANANHLASLFLGIELISLPLFGLVGYAFRQKRSLEASIKYTILSAAASSFLLFGMALVYAQSGDLSFVALGKKLGDGMLNEPLLLAGFGLMIVGLGFKLSLVPFHLWTPDVYQGAPAPVSTFLATASKIAIFGVVMRLFLYAPVGDSEAIRVVLAIIAFASIIFGNLMALSQTNIKRLLGYSSISHLGYLLVALIALQTGEMSMEAVGVYLVGYLFSSLGAFGVVSLMSSPYRGPDADSLFSYRGLFWHRPILAAVMTVMMLSLAGIPMTLGFIGKFYVLAVGVQAHLWWLVGAVVVGSAIGLYYYLRVAVSLYLHAPEQPGRDAPSNWQYSAGGIVVLISALLVLVLGVWPQPLISIVRLAMPLM.

14 consecutive transmembrane segments (helical) span residues 8–28 (LIAL…MLSI), 35–55 (FLNA…LWFV), 71–91 (GFAM…CTFA), 105–125 (FYLL…ANHL), 127–147 (SLFL…GYAF), 159–179 (YTIL…LVYA), 203–223 (LLAG…LVPF), 235–255 (PAPV…GVVM), 271–291 (VVLA…ALSQ), 297–317 (LLGY…IALQ), 326–346 (VGVY…VVSL), 373–393 (AAVM…LGFI), 408–430 (WWLV…RVAV), and 455–475 (IVVL…QPLI).

The protein belongs to the complex I subunit 2 family. In terms of assembly, NDH-1 is composed of 13 different subunits. Subunits NuoA, H, J, K, L, M, N constitute the membrane sector of the complex.

The protein localises to the cell inner membrane. The catalysed reaction is a quinone + NADH + 5 H(+)(in) = a quinol + NAD(+) + 4 H(+)(out). NDH-1 shuttles electrons from NADH, via FMN and iron-sulfur (Fe-S) centers, to quinones in the respiratory chain. The immediate electron acceptor for the enzyme in this species is believed to be ubiquinone. Couples the redox reaction to proton translocation (for every two electrons transferred, four hydrogen ions are translocated across the cytoplasmic membrane), and thus conserves the redox energy in a proton gradient. In Escherichia coli O81 (strain ED1a), this protein is NADH-quinone oxidoreductase subunit N.